The following is a 30-amino-acid chain: AFNLRNRNFLKLLDFTPREIQYMIDLAIDL.

It belongs to the aspartate/ornithine carbamoyltransferase superfamily. OTCase family.

The protein localises to the cytoplasm. It carries out the reaction carbamoyl phosphate + L-ornithine = L-citrulline + phosphate + H(+). Its pathway is amino-acid degradation; L-arginine degradation via ADI pathway; carbamoyl phosphate from L-arginine: step 2/2. The sequence is that of Ornithine carbamoyltransferase, catabolic (arcB) from Aeromonas caviae (Aeromonas punctata).